The following is a 719-amino-acid chain: Protein borderless (719 aa).

Positions Met1 to Ala33 are cleaved as a signal peptide. Residues Ala34–Arg650 lie on the Extracellular side of the membrane. 4 consecutive Ig-like domains span residues Gln40–Ser128, Pro134–Asn241, Ala246–Ser334, and Pro341–Met429. 4 disulfides stabilise this stretch: Cys55–Cys125, Cys172–Cys224, Cys267–Cys318, and Cys363–Cys413. Fibronectin type-III domains follow at residues Ala434–Ser527 and Ala555–Gln646. A helical transmembrane segment spans residues Ala651–Leu671. Residues Tyr672–Thr719 lie on the Cytoplasmic side of the membrane. Positions Asp685–Thr719 are disordered. Over residues Ala688–Glu704 the composition is skewed to acidic residues. A compositionally biased stretch (basic and acidic residues) spans Gln705–Thr719.

Belongs to the immunoglobulin superfamily. In terms of assembly, interacts with tutl. As to expression, in the visual system, expressed in lamina and medulla (at protein level).

Its subcellular location is the cell membrane. The protein localises to the cell projection. It localises to the axon. Functionally, in the developing eye, has a role in axonal targeting of the R7 photoreceptor where it functions together with tutl. Probably mediates homotypic cell adhesion; the effect is inhibited by Lar. In Drosophila melanogaster (Fruit fly), this protein is Protein borderless.